The chain runs to 597 residues: Pentatricopeptide repeat-containing protein At2g21090 (597 aa).

PPR repeat units follow at residues 45-79 (PFDL…GFKR), 81-111 (NTLL…MHLR), 112-142 (NLYS…MPER), 143-177 (DVVS…GIKF), 178-212 (NEFS…GFLS), 213-243 (NVVL…MTVK), 244-274 (DIHI…MPEK), 275-309 (NPVS…GVKP), 310-344 (EQFT…NVRP), 345-375 (NAIV…CDDK), 377-411 (DCVF…RVQP), 412-447 (NRTT…GIVP), and 448-478 (DQEH…MPFE). The tract at residues 483 to 558 (IWNAILGVCR…EKAVSWIEIE (76 aa)) is type E motif. Residues 559–591 (KKVEAFTVSDGSHAHARKEEIYFILHNLAAVIE) form a type E(+) motif region.

This sequence belongs to the PPR family. PCMP-E subfamily.

This chain is Pentatricopeptide repeat-containing protein At2g21090 (PCMP-E48), found in Arabidopsis thaliana (Mouse-ear cress).